A 266-amino-acid chain; its full sequence is tRNA (guanine-N(7)-)-methyltransferase (266 aa).

Positions 1 to 32 are disordered; the sequence is MSDHGRMHIPESGLATPAAAHSDDPPHPHFNR. Glutamate 96, glutamate 121, aspartate 148, and aspartate 171 together coordinate S-adenosyl-L-methionine. Residue aspartate 171 is part of the active site. Substrate contacts are provided by lysine 175 and aspartate 207.

This sequence belongs to the class I-like SAM-binding methyltransferase superfamily. TrmB family.

It catalyses the reaction guanosine(46) in tRNA + S-adenosyl-L-methionine = N(7)-methylguanosine(46) in tRNA + S-adenosyl-L-homocysteine. It functions in the pathway tRNA modification; N(7)-methylguanine-tRNA biosynthesis. Catalyzes the formation of N(7)-methylguanine at position 46 (m7G46) in tRNA. In Mycolicibacterium vanbaalenii (strain DSM 7251 / JCM 13017 / BCRC 16820 / KCTC 9966 / NRRL B-24157 / PYR-1) (Mycobacterium vanbaalenii), this protein is tRNA (guanine-N(7)-)-methyltransferase.